Reading from the N-terminus, the 1079-residue chain is MEDEAVLDRGASFLKHVCDEEEVEGHHTIYIGVHVPKSYRRRRRHKRKAGHKEKKEKERISENYSDKSDVENADESSSSILKPLISPAAERIRFILGEEDDSPAPPQLFTELDELLAVDGQEMEWKETARWIKFEEKVEQGGERWSKPHVATLSLHSLFELRTCMEKGSIMLDREASSLPQLVEMIADHQIETGLLKPDLKDKVTYTLLRKHRHQTKKSNLRSLADIGKTVSSASRMFSNPDNGSPAMTHRNLTSSSLNDISDKPEKDQLKNKFMKKLPRDAEASNVLVGEVDFLDTPFIAFVRLQQAVMLGALTEVPVPTRFLFILLGPKGKAKSYHEIGRAIATLMSDEVFHDIAYKAKDRHDLIAGIDEFLDEVIVLPPGEWDPAIRIEPPKSLPSSDKRKNMYSGGENVQMNGDTPHDGGHGGGGHGDCEELQRTGRFCGGLIKDIKRKAPFFASDFYDALNIQALSAILFIYLATVTNAITFGGLLGDATDNMQGVLESFLGTAVSGAIFCLFAGQPLTILSSTGPVLVFERLLFNFSKDHSFDYLEFRLWIGLWSAFMCLILVATDASFLVQYFTRFTEEGFSSLISFIFIYDAFKKMIKLADYYPINSDFRVGYNTHFSCACLPPDPVNLSVSNDTTLAPEDLPTVSSTDMYHNATFDWAYLSKKECVKFGGKLVGNNCDFVPDITLMSFILFLGTYTSSMAMKKFKTSRYFPTTARKLISDFAIILSILIFCVIDALVGVDTPKLIVPSEFKPTSPHRGWFVPPFGGNPWWVCLAAAIPALLVTILIFMDQQITAVIVNRKEHKLKKGAGYHLDLFWVAILMVVCSFMALPWYVAATVISIAHIDSLKMETETSAPGEQPKFLGVREQRVTGTLVFILTGLSVFMAPILKFIPMPVLYGVFLYMGVASLNGVQFMDRLKLLLMPLKHQPDFIYLRHVPLRRVHLFTSLQVLCLALLWILKSTVAAIIFPVMILALVAVRKGMDYLFSQHDLSFLDDVIPEKDKKKKEDEKKKKKKKGSLDSDNDDSDCPYSEKVPSIKIPMDITEQQPFLSDNKPLDRERSSTFLERHTSC.

Residues 1–62 (MEDEAVLDRG…EKKEKERISE (62 aa)) are required for interaction with AHCYL1. At 1 to 466 (MEDEAVLDRG…FASDFYDALN (466 aa)) the chain is on the cytoplasmic side. A Phosphoserine modification is found at Glu2. Tyr30 carries the post-translational modification Phosphotyrosine. Residues 39-52 (YRRRRRHKRKAGHK) are compositionally biased toward basic residues. Residues 39–78 (YRRRRRHKRKAGHKEKKEKERISENYSDKSDVENADESSS) form a disordered region. Over residues 53 to 70 (EKKEKERISENYSDKSDV) the composition is skewed to basic and acidic residues. Residues Ser61, Ser65, Ser68, Ser223, Ser232, Ser233, and Ser245 each carry the phosphoserine modification. Residues 235-266 (SRMFSNPDNGSPAMTHRNLTSSSLNDISDKPE) are disordered. A phosphothreonine mark is found at Thr249 and Thr254. Residues 251-260 (RNLTSSSLND) show a composition bias toward polar residues. Phosphoserine occurs at positions 256, 257, and 262. Residues 467 to 491 (IQALSAILFIYLATVTNAITFGGLL) traverse the membrane as a helical segment. Over 492-501 (GDATDNMQGV) the chain is Extracellular. The helical transmembrane segment at 502–520 (LESFLGTAVSGAIFCLFAG) threads the bilayer. Residue Gln521 is a topological domain, cytoplasmic. A discontinuously helical transmembrane segment spans residues 522 to 542 (PLTILSSTGPVLVFERLLFNF). At 543–550 (SKDHSFDY) the chain is on the extracellular side. The helical transmembrane segment at 551–571 (LEFRLWIGLWSAFMCLILVAT) threads the bilayer. The Cytoplasmic portion of the chain corresponds to 572 to 585 (DASFLVQYFTRFTE). The helical transmembrane segment at 586 to 609 (EGFSSLISFIFIYDAFKKMIKLAD) threads the bilayer. N-linked (GlcNAc) asparagine glycans are attached at residues Ile597 and Phe617. Residues 610-692 (YYPINSDFRV…GNNCDFVPDI (83 aa)) lie on the Extracellular side of the membrane. A helical membrane pass occupies residues 693 to 710 (TLMSFILFLGTYTSSMAM). Residues 711 to 725 (KKFKTSRYFPTTARK) lie on the Cytoplasmic side of the membrane. A helical membrane pass occupies residues 726–745 (LISDFAIILSILIFCVIDAL). Residues 746–779 (VGVDTPKLIVPSEFKPTSPHRGWFVPPFGGNPWW) are Extracellular-facing. Residues 748 to 779 (VDTPKLIVPSEFKPTSPHRGWFVPPFGGNPWW) form an interaction with CA4 region. Residues 780 to 807 (VCLAAAIPALLVTILIFMDQQITAVIVN) traverse the membrane as a helical segment. Topologically, residues 808 to 819 (RKEHKLKKGAGY) are cytoplasmic. A helical membrane pass occupies residues 820-836 (HLDLFWVAILMVVCSFM). Ala837 is a topological domain (extracellular). Residues 838–855 (LPWYVAATVISIAHIDSL) traverse the membrane as a discontinuously helical segment. At 856–877 (KMETETSAPGEQPKFLGVREQR) the chain is on the cytoplasmic side. The chain crosses the membrane as a helical span at residues 878 to 894 (VTGTLVFILTGLSVFMA). Residues 895 to 901 (PILKFIP) lie on the Extracellular side of the membrane. A helical membrane pass occupies residues 902–918 (MPVLYGVFLYMGVASLN). Residues 919-960 (GVQFMDRLKLLLMPLKHQPDFIYLRHVPLRRVHLFTSLQVLC) lie on the Cytoplasmic side of the membrane. Residues 961–986 (LALLWILKSTVAAIIFPVMILALVAV) constitute an intramembrane region (discontinuously helical). The Cytoplasmic portion of the chain corresponds to 987 to 1079 (RKGMDYLFSQ…STFLERHTSC (93 aa)). The CA2-binding stretch occupies residues 1002–1004 (LDD). The tract at residues 1012–1079 (KKKEDEKKKK…STFLERHTSC (68 aa)) is disordered. A phosphoserine mark is found at Ser1026 and Ser1029. Position 1026 is a phosphoserine; by PKA (Ser1026). The CA2-binding stretch occupies residues 1030–1033 (DNDD). 2 positions are modified to phosphoserine: Ser1034 and Ser1044. The segment at 1057–1059 (FLS) is required for basolateral targeting. A phosphoserine mark is found at Asp1060, Leu1064, Ser1069, and Ser1078. Residues 1062–1079 (KPLDRERSSTFLERHTSC) are compositionally biased toward basic and acidic residues.

Belongs to the anion exchanger (TC 2.A.31) family. In terms of assembly, homodimer. Interacts with CA2/carbonic anhydrase 2 and CA4/carbonic anhydrase 4 which may regulate transporter activity. Isoform 1 but not isoform 2 interacts with AHCYL1 (via PEST domain when phosphorylated); the interaction increases SLC4A4 isoform 1 activity. Interacts with AHCYL2. Phosphorylation of Ser-1026 by PKA increases the binding of CA2 and changes the Na(+):HCO3(-) stoichiometry of the transporter from 3:1 to 2:1. Phosphorylated in presence of STK39 and dephosphorylated in presence of PP1 phosphatase; phosphorylation seems to inhibit SLC4A4 activity. In terms of processing, N-glycosylation is not necessary for the transporter basic functions. As to expression, specifically expressed in kidney and to a lower extent in liver, lung, spleen, brain, skeletal muscle and heart. In kidney, expressed in proximal tubules at the corticomedullary junction. Isoform 2 is specifically expressed in kidney. Isoform 1 is expressed in kidney and pancreas while isoform 3 is specifically expressed in brain (at protein level). In brain, isoform 1 is expressed in astrocytes while isoform 3 is expressed in neurons (at protein level). In the eye, isoform 1 is expressed in cornea, conjunctiva, lens epithelium, ciliary bodies and retina while isoform 2 is detected only in the conjunctiva.

It is found in the basolateral cell membrane. It localises to the cell membrane. The enzyme catalyses 2 hydrogencarbonate(out) + Na(+)(out) = 2 hydrogencarbonate(in) + Na(+)(in). It carries out the reaction 3 hydrogencarbonate(out) + Na(+)(out) = 3 hydrogencarbonate(in) + Na(+)(in). Inhibited by 4,4'-diisothiocyanatostilbene-2,2'-disulfonic acid (DIDS). In terms of biological role, electrogenic sodium/bicarbonate cotransporter with a Na(+):HCO3(-) stoichiometry varying from 1:2 to 1:3. May regulate bicarbonate influx/efflux at the basolateral membrane of cells and regulate intracellular pH. This Rattus norvegicus (Rat) protein is Electrogenic sodium bicarbonate cotransporter 1 (Slc4a4).